Here is a 165-residue protein sequence, read N- to C-terminus: Peptidyl-prolyl cis-trans isomerase NIMA-interacting 1 (165 aa).

The WW domain occupies 5–39; the sequence is EKLPPGWEKRMSRSSGRVYYFNHITNASQWERPSG. The disordered stretch occupies residues 33 to 56; it reads QWERPSGGSTVGGSSKNGQGEPAK. Lys-48 bears the N6-acetyllysine mark. The region spanning 54–165 is the PpiC domain; that stretch reads PAKVRCSHLL…SGIHIILRTE (112 aa). Residues Ser-73 and Ser-110 each carry the phosphoserine modification.

As to quaternary structure, interacts with STIL. Interacts with KIF20B. Interacts with NEK6. Interacts (via WW domain) with PRKX. Interacts with BTK. Interacts (via PpiC domain) with DAPK1. Interacts with the phosphorylated form of RAF1. Interacts (via WW domain) with ATCAY; upon NGF stimulation. Interacts with PML. Interacts with BCL6. Interacts with FBXW7, disrupting FBXW7 dimerization and promoting FBXW7 autoubiquitination and degradation. Directly interacts with RBBP8/CtIP; this interaction depends upon RBBP8 phosphorylation. Interacts (via WW domain) with IRAK3/IRAK-M (when phosphorylated at 'Ser-110') in response to IL33-mediated (but not TLR4 ligand LPS) dendritic cell stimulation. Interacts with PGK1 (when phosphorylated at 'Ser-203'); the interaction is direct, occurs under hypoxic conditions, and targets PGK1 to the mitochondrion by promoting interactions with the TOM complex. Post-translationally, phosphorylation at Ser-73 by DAPK1 results in inhibition of its catalytic activity, nuclear localization, and its ability to induce centrosome amplification, chromosome instability and cell transformation. Ser-73 is dephosphorylated upon IL33-stimulation of dendritic cells. Expressed in dendritic cells (at protein level).

The protein localises to the nucleus. It is found in the nucleus speckle. It localises to the cytoplasm. The catalysed reaction is [protein]-peptidylproline (omega=180) = [protein]-peptidylproline (omega=0). Functionally, peptidyl-prolyl cis/trans isomerase (PPIase) that binds to and isomerizes specific phosphorylated Ser/Thr-Pro (pSer/Thr-Pro) motifs. By inducing conformational changes in a subset of phosphorylated proteins, acts as a molecular switch in multiple cellular processes. Displays a preference for an acidic residue N-terminal to the isomerized proline bond. Regulates mitosis presumably by interacting with NIMA and attenuating its mitosis-promoting activity. Down-regulates kinase activity of BTK. Can transactivate multiple oncogenes and induce centrosome amplification, chromosome instability and cell transformation. Required for the efficient dephosphorylation and recycling of RAF1 after mitogen activation. Binds and targets PML and BCL6 for degradation in a phosphorylation-dependent manner. Acts as a regulator of JNK cascade by binding to phosphorylated FBXW7, disrupting FBXW7 dimerization and promoting FBXW7 autoubiquitination and degradation: degradation of FBXW7 leads to subsequent stabilization of JUN. May facilitate the ubiquitination and proteasomal degradation of RBBP8/CtIP through CUL3/KLHL15 E3 ubiquitin-protein ligase complex, hence favors DNA double-strand repair through error-prone non-homologous end joining (NHEJ) over error-free, RBBP8-mediated homologous recombination (HR). Upon IL33-induced lung inflammation, catalyzes cis-trans isomerization of phosphorylated IRAK3/IRAK-M, inducing IRAK3 stabilization, nuclear translocation and expression of pro-inflammatory genes in dendritic cells. Catalyzes cis-trans isomerization of phosphorylated phosphoglycerate kinase PGK1 under hypoxic conditions to promote its binding to the TOM complex and targeting to the mitochondrion. The protein is Peptidyl-prolyl cis-trans isomerase NIMA-interacting 1 (Pin1) of Mus musculus (Mouse).